Reading from the N-terminus, the 473-residue chain is Fumarate hydratase class II 2 (473 aa).

Residues 1-28 (MAKSARTKTARPATRTETDSFGPIEVPS) are disordered. Substrate-binding positions include 108–110 (SGT), 139–142 (HPND), 149–151 (SSN), and T197. H198 acts as the Proton donor/acceptor in catalysis. S328 is a catalytic residue. Substrate is bound by residues S329 and 334–336 (KVN).

It belongs to the class-II fumarase/aspartase family. Fumarase subfamily. Homotetramer.

It localises to the cytoplasm. The enzyme catalyses (S)-malate = fumarate + H2O. Its pathway is carbohydrate metabolism; tricarboxylic acid cycle; (S)-malate from fumarate: step 1/1. In terms of biological role, involved in the TCA cycle. Catalyzes the stereospecific interconversion of fumarate to L-malate. This is Fumarate hydratase class II 2 from Bradyrhizobium diazoefficiens (strain JCM 10833 / BCRC 13528 / IAM 13628 / NBRC 14792 / USDA 110).